Reading from the N-terminus, the 307-residue chain is Tyrosine recombinase XerC (307 aa).

The Core-binding (CB) domain occupies 6–89 (HNTLQTVNTF…TLRTFFRYLM (84 aa)). The Tyr recombinase domain maps to 110-293 (RLPKALDVDQ…DFQHLAQVYD (184 aa)). Active-site residues include R151, K175, H245, R248, and H271. Y280 functions as the O-(3'-phospho-DNA)-tyrosine intermediate in the catalytic mechanism.

Belongs to the 'phage' integrase family. XerC subfamily. Forms a cyclic heterotetrameric complex composed of two molecules of XerC and two molecules of XerD.

It is found in the cytoplasm. Functionally, site-specific tyrosine recombinase, which acts by catalyzing the cutting and rejoining of the recombining DNA molecules. The XerC-XerD complex is essential to convert dimers of the bacterial chromosome into monomers to permit their segregation at cell division. It also contributes to the segregational stability of plasmids. The protein is Tyrosine recombinase XerC of Alcanivorax borkumensis (strain ATCC 700651 / DSM 11573 / NCIMB 13689 / SK2).